Here is a 201-residue protein sequence, read N- to C-terminus: Nuclear protein UL4 (201 aa).

It belongs to the alphaherpesvirinae HHV-1 UL4 family.

It localises to the host nucleus. The chain is Nuclear protein UL4 from Human herpesvirus 2 (strain HG52) (HHV-2).